The following is a 346-amino-acid chain: tRNA/tmRNA (uracil-C(5))-methyltransferase (346 aa).

5 residues coordinate S-adenosyl-L-methionine: glutamine 168, tyrosine 197, asparagine 202, glutamate 218, and aspartate 278. Residue cysteine 303 is the Nucleophile of the active site. Glutamate 337 functions as the Proton acceptor in the catalytic mechanism.

This sequence belongs to the class I-like SAM-binding methyltransferase superfamily. RNA M5U methyltransferase family. TrmA subfamily.

It carries out the reaction uridine(54) in tRNA + S-adenosyl-L-methionine = 5-methyluridine(54) in tRNA + S-adenosyl-L-homocysteine + H(+). The catalysed reaction is uridine(341) in tmRNA + S-adenosyl-L-methionine = 5-methyluridine(341) in tmRNA + S-adenosyl-L-homocysteine + H(+). Functionally, dual-specificity methyltransferase that catalyzes the formation of 5-methyluridine at position 54 (m5U54) in all tRNAs, and that of position 341 (m5U341) in tmRNA (transfer-mRNA). The protein is tRNA/tmRNA (uracil-C(5))-methyltransferase of Campylobacter lari (strain RM2100 / D67 / ATCC BAA-1060).